We begin with the raw amino-acid sequence, 604 residues long: Matrix metalloproteinase-21 (604 aa).

A signal peptide spans 1–22 (MPSIKLLVWCCLCVISPRLCHS). A propeptide spanning residues 23 to 180 (EKLFHSRDRS…PDPPKIRRKR (158 aa)) is cleaved from the precursor. Positions 132–175 (KPRCGVPDNQMAKKETEKPTAAQSLENKTKDSENVTQQNPDPPK) are disordered. Positions 133-140 (PRCGVPDN) match the Cysteine switch motif. Cys135 serves as a coordination point for Zn(2+). N-linked (GlcNAc...) asparagine glycans are attached at residues Asn158 and Asn165. Residue His318 participates in Zn(2+) binding. Glu319 is a catalytic residue. Zn(2+)-binding residues include His322 and His328. Cys364 and Cys595 are disulfide-bonded. Hemopexin repeat units follow at residues 365 to 424 (EGPF…WHGI), 426 to 482 (VQNI…FPGI), 483 to 531 (PSPI…FPAV), and 538 to 594 (KGNI…WFDI). Asn404 and Asn407 each carry an N-linked (GlcNAc...) asparagine glycan.

The protein belongs to the peptidase M10A family. Zn(2+) is required as a cofactor. Ca(2+) serves as cofactor. Post-translationally, the precursor is cleaved by a furin endopeptidase.

The protein localises to the secreted. Functionally, plays a specialized role in the generation of left-right asymmetry during embryogenesis. May act as a negative regulator of the NOTCH-signaling pathway. This chain is Matrix metalloproteinase-21 (mmp21), found in Xenopus laevis (African clawed frog).